Here is a 141-residue protein sequence, read N- to C-terminus: Large ribosomal subunit protein uL16m (141 aa).

This sequence belongs to the universal ribosomal protein uL16 family.

The protein localises to the mitochondrion. This Acanthamoeba castellanii (Amoeba) protein is Large ribosomal subunit protein uL16m (RPL16).